Here is a 108-residue protein sequence, read N- to C-terminus: Large ribosomal subunit protein P1B (108 aa).

Positions 72–84 (AGSASGAAAGGEA) are enriched in low complexity. The segment at 72-108 (AGSASGAAAGGEAAAEEAAEEEAAEESDDDMGFGLFD) is disordered. Residues 85-102 (AAEEAAEEEAAEESDDDM) show a composition bias toward acidic residues.

The protein belongs to the eukaryotic ribosomal protein P1/P2 family. P1 and P2 exist as dimers at the large ribosomal subunit. Phosphorylated.

Plays an important role in the elongation step of protein synthesis. This chain is Large ribosomal subunit protein P1B (RPP1B), found in Candida albicans (Yeast).